Reading from the N-terminus, the 470-residue chain is Serine hydroxymethyltransferase, cytosolic (470 aa).

Positions 1–11 (MSAYALSQSHR) are enriched in polar residues. The tract at residues 1-23 (MSAYALSQSHRQLTEGHLKDTDP) is disordered. S2 is subject to N-acetylserine. A compositionally biased stretch (basic and acidic residues) spans 12–23 (QLTEGHLKDTDP). K249 is modified (N6-(pyridoxal phosphate)lysine).

The protein belongs to the SHMT family. In terms of assembly, homotetramer. The cofactor is pyridoxal 5'-phosphate.

It is found in the cytoplasm. It catalyses the reaction (6R)-5,10-methylene-5,6,7,8-tetrahydrofolate + glycine + H2O = (6S)-5,6,7,8-tetrahydrofolate + L-serine. The protein operates within one-carbon metabolism; tetrahydrofolate interconversion. In terms of biological role, interconversion of serine and glycine. The chain is Serine hydroxymethyltransferase, cytosolic (SHM2) from Candida albicans (strain SC5314 / ATCC MYA-2876) (Yeast).